The sequence spans 457 residues: Equilibrative nucleoside transporter 1 (457 aa).

Topologically, residues 1–12 are cytoplasmic; it reads MTTSHQPQDRYK. Residues 13–29 traverse the membrane as a helical segment; that stretch reads AVWLIFFVLGLGTLLPW. The Extracellular portion of the chain corresponds to 30–82; it reads NFFITATQYFTSRLNTSQNISLVTNQSCESTEALADPSVSLPARSSLSAIFNN. Residues N44, N48, and N54 are each glycosylated (N-linked (GlcNAc...) asparagine). Residues 83–107 form a helical membrane-spanning segment; it reads VMTLCAMLPLLIFTCLNSFLHQKVS. The Cytoplasmic segment spans residues 108–111; that stretch reads QSLR. A helical transmembrane segment spans residues 112-130; it reads ILGSLLAILLVFLVTATLV. The Extracellular portion of the chain corresponds to 131–138; the sequence is KVQMDALS. Residues 139–157 form a helical membrane-spanning segment; sequence FFIITMIKIVLINSFGAIL. Over 158–174 the chain is Cytoplasmic; the sequence is QASLFGLAGVLPANYTA. A helical transmembrane segment spans residues 175–199; it reads PIMSGQGLAGFFTSVAMICAVASGS. Residues 200–206 lie on the Extracellular side of the membrane; sequence KLSESAF. A helical transmembrane segment spans residues 207-227; it reads GYFITACAVVILAILCYLALP. Topologically, residues 228-291 are cytoplasmic; that stretch reads WMEFYRHYLQ…IKAILKSIWV (64 aa). At S254 the chain carries Phosphoserine. Over residues 255–266 the composition is skewed to basic and acidic residues; it reads EGEEPRGGREES. The segment at 255–275 is disordered; sequence EGEEPRGGREESGVPGPNSLP. At S273 the chain carries Phosphoserine. Residues 292-311 form a helical membrane-spanning segment; the sequence is LALSVCFIFTVTIGLFPAVT. At 312–323 the chain is on the extracellular side; the sequence is AEVESSIAGTSP. The helical transmembrane segment at 324 to 343 threads the bilayer; that stretch reads WKNCYFIPVACFLNFNVFDW. Topologically, residues 344 to 360 are cytoplasmic; the sequence is LGRSLTAICMWPGQDSR. A helical transmembrane segment spans residues 361-379; sequence WLPVLVACRVVFIPLLMLC. The Extracellular segment spans residues 380–394; sequence NVKQHHYLPSLFKHD. The helical transmembrane segment at 395 to 414 threads the bilayer; the sequence is VWFITFMAAFAFSNGYLASL. The Cytoplasmic portion of the chain corresponds to 415–432; it reads CMCFGPKKVKPAEAETAG. Residues 433–453 form a helical membrane-spanning segment; it reads NIMSFFLCLGLALGAVLSFLL. Topologically, residues 454–457 are extracellular; the sequence is RALV.

Belongs to the SLC29A/ENT transporter (TC 2.A.57) family. As to quaternary structure, identified in a complex with STOM. In terms of tissue distribution, expressed in jejunum, liver and lung. Expressed in testis at the blood-testis barrier (at protein level). Expressed in ventricular myocytes (at protein level). Expressed in kidney.

The protein localises to the basolateral cell membrane. Its subcellular location is the apical cell membrane. The protein resides in the cell membrane. The catalysed reaction is adenosine(in) = adenosine(out). It carries out the reaction guanosine(in) = guanosine(out). It catalyses the reaction inosine(in) = inosine(out). The enzyme catalyses uridine(out) = uridine(in). The catalysed reaction is thymidine(in) = thymidine(out). It carries out the reaction cytidine(in) = cytidine(out). It catalyses the reaction adenine(out) = adenine(in). The enzyme catalyses guanine(out) = guanine(in). The catalysed reaction is thymine(out) = thymine(in). It carries out the reaction uracil(in) = uracil(out). It catalyses the reaction hypoxanthine(out) = hypoxanthine(in). With respect to regulation, transport activity is sensitive to low concentrations of the inhibitor nitrobenzylmercaptopurine riboside (NBMPR). In terms of biological role, uniporter involved in the facilitative transport of nucleosides and nucleobases, and contributes to maintaining their cellular homeostasis. Functions as a Na(+)-independent transporter. Involved in the transport of nucleosides such as adenosine, thymidine and uridine. Also transports purine nucleobases (hypoxanthine, adenine, guanine) and pyrimidine nucleobases (thymine, uracil). Mediates basolateral nucleoside uptake into Sertoli cells, thereby regulating the transport of nucleosides in testis across the blood-testis barrier. Regulates inosine levels in brown adipocytes tissues (BAT) and extracellular inosine levels, which controls BAT-dependent energy expenditure. The polypeptide is Equilibrative nucleoside transporter 1 (Rattus norvegicus (Rat)).